Here is a 421-residue protein sequence, read N- to C-terminus: Inhibitor of growth protein 3 (421 aa).

The interval 129–163 is disordered; sequence PSQPVNNHHAHSHTPVEKRKYNPTSHHAAADHIPE. Glycyl lysine isopeptide (Lys-Gly) (interchain with G-Cter in SUMO2) cross-links involve residues Lys148, Lys165, and Lys167. An N6-acetyllysine modification is found at Lys181. Lys256 participates in a covalent cross-link: Glycyl lysine isopeptide (Lys-Gly) (interchain with G-Cter in SUMO2). Lys264 carries the post-translational modification N6-acetyllysine. Over residues 286 to 296 the composition is skewed to polar residues; that stretch reads TQNASSSATDS. The disordered stretch occupies residues 286 to 323; sequence TQNASSSATDSRSGRKSKNNTKSSSQQSSSSSSSSSSS. A compositionally biased stretch (low complexity) spans 308–323; sequence SSSQQSSSSSSSSSSS. A PHD-type zinc finger spans residues 363-412; sequence PRYCICNQVSYGEMVGCDNQDCPIEWFHYGCVGLTEAPKGKWFCPQCTAA. Zn(2+)-binding residues include Cys366, Cys368, Cys379, Cys384, His390, Cys393, Cys406, and Cys409.

The protein belongs to the ING family. As to quaternary structure, interacts with H3K4me3 and to a lesser extent with H3K4me2. Component of the NuA4 histone acetyltransferase complex which contains the catalytic subunit KAT5/TIP60 and the subunits EP400, TRRAP/PAF400, BRD8/SMAP, EPC1, DMAP1/DNMAP1, RUVBL1/TIP49, RUVBL2, ING3, actin, ACTL6A/BAF53A, MORF4L1/MRG15, MORF4L2/MRGX, MRGBP, YEATS4/GAS41, VPS72/YL1 and MEAF6. The NuA4 complex interacts with MYC. HTATTIP/TIP60, EPC1, and ING3 together constitute a minimal HAT complex termed Piccolo NuA4. Component of a SWR1-like complex.

It localises to the nucleus. Functionally, component of the NuA4 histone acetyltransferase (HAT) complex which is involved in transcriptional activation of select genes principally by acetylation of nucleosomal histones H4 and H2A. This modification may both alter nucleosome - DNA interactions and promote interaction of the modified histones with other proteins which positively regulate transcription. This complex may be required for the activation of transcriptional programs associated with oncogene and proto-oncogene mediated growth induction, tumor suppressor mediated growth arrest and replicative senescence, apoptosis, and DNA repair. NuA4 may also play a direct role in DNA repair when directly recruited to sites of DNA damage. Component of a SWR1-like complex that specifically mediates the removal of histone H2A.Z/H2AZ1 from the nucleosome. This chain is Inhibitor of growth protein 3 (Ing3), found in Mus musculus (Mouse).